Here is a 167-residue protein sequence, read N- to C-terminus: Phospholipase A and acyltransferase 1 (167 aa).

Residues 1–138 (MAVNDCFSLT…GEGVSEQANR (138 aa)) are Cytoplasmic-facing. Residues 20–135 (LIEVFRPCYQ…LRYGEGVSEQ (116 aa)) enclose the LRAT domain. Histidine 30 is an active-site residue. The Acyl-thioester intermediate role is filled by cysteine 119. A helical transmembrane segment spans residues 139 to 159 (AIGTIGLVAAGIDIFTFLGLF). The Lumenal portion of the chain corresponds to 160–167 (PKRQGAKS).

It belongs to the H-rev107 family.

It localises to the membrane. Its subcellular location is the cytoplasm. The protein resides in the nucleus. The catalysed reaction is a 1,2-diacyl-sn-glycero-3-phosphocholine + H2O = a 1-acyl-sn-glycero-3-phosphocholine + a fatty acid + H(+). The enzyme catalyses a 1,2-diacyl-sn-glycero-3-phosphocholine + H2O = a 2-acyl-sn-glycero-3-phosphocholine + a fatty acid + H(+). It carries out the reaction 1,2-dihexadecanoyl-sn-glycero-3-phosphocholine + H2O = 2-hexadecanoyl-sn-glycero-3-phosphocholine + hexadecanoate + H(+). It catalyses the reaction 1,2-dihexadecanoyl-sn-glycero-3-phosphocholine + H2O = 1-hexadecanoyl-sn-glycero-3-phosphocholine + hexadecanoate + H(+). The catalysed reaction is 1-hexadecanoyl-2-(5Z,8Z,11Z,14Z-eicosatetraenoyl)-sn-glycero-3-phosphoethanolamine + H2O = 2-(5Z,8Z,11Z,14Z)-eicosatetraenoyl-sn-glycero-3-phosphoethanolamine + hexadecanoate + H(+). The enzyme catalyses 1-hexadecanoyl-2-(5Z,8Z,11Z,14Z-eicosatetraenoyl)-sn-glycero-3-phosphoethanolamine + H2O = 1-hexadecanoyl-sn-glycero-3-phosphoethanolamine + (5Z,8Z,11Z,14Z)-eicosatetraenoate + H(+). It carries out the reaction 1,2-di-(9Z-octadecenoyl)-sn-glycero-3-phosphoethanolamine + 1,2-dihexadecanoyl-sn-glycero-3-phosphocholine = hexadecanoyl-sn-glycero-3-phosphocholine + N-hexadecanoyl-1,2-di-(9Z-octadecenoyl)-sn-glycero-3-phosphoethanolamine + H(+). It catalyses the reaction 1,2-dihexadecanoyl-sn-glycero-3-phosphocholine + a 2-acyl-sn-glycero-3-phosphocholine = a 1-hexadecanoyl-2-acyl-sn-glycero-3-phosphocholine + 2-hexadecanoyl-sn-glycero-3-phosphocholine. Its function is as follows. Exhibits both phospholipase A1/2 and acyltransferase activities. Shows phospholipase A1 (PLA1) and A2 (PLA2) activity, catalyzing the calcium-independent release of fatty acids from the sn-1 or sn-2 position of glycerophospholipids. Shows O-acyltransferase activity, catalyzing the transfer of a fatty acyl group from glycerophospholipid to the hydroxyl group of lysophospholipid. This Rattus norvegicus (Rat) protein is Phospholipase A and acyltransferase 1.